Here is a 209-residue protein sequence, read N- to C-terminus: GTP-binding protein RHO1 (209 aa).

Ser2 carries the N-acetylserine modification. A GTP-binding site is contributed by 17–24 (GDGACGKT). The Effector region motif lies at 39-47 (YVPTVFENY). Residues 64-68 (DTAGQ) and 122-125 (CKVD) contribute to the GTP site. Residues 187-209 (KSKTNGKAKKNTTEKKKKKCVLL) form a disordered region. A compositionally biased stretch (basic residues) spans 190–209 (TNGKAKKNTTEKKKKKCVLL). Cys206 is modified (cysteine methyl ester). Cys206 carries S-geranylgeranyl cysteine lipidation. A propeptide spans 207-209 (VLL) (removed in mature form).

It belongs to the small GTPase superfamily. Rho family. As to quaternary structure, interacts with BEM4; the interaction is direct. Interacts with SEC3; the interaction is direct. Interacts with the GAP BAG7. Interacts with the GAP LRG1. Interacts with the GAP SAC7. Interacts with the GAP RDI1. Interacts with the 1,3-beta-glucan synthase component FKS1. Interacts with the protein kinase PKC1. Interacts with the G protein beta subunit STE4. Interacts with SKN7. Interacts with TUS1. Interacts with BNI1.

Its subcellular location is the cell membrane. It localises to the endosome membrane. The protein localises to the peroxisome membrane. It carries out the reaction GTP + H2O = GDP + phosphate + H(+). Alternates between an inactive form bound to GDP and an active form bound to GTP. Activated by the guanine nucleotide-exchange factors (GEFs) ROM1, ROM2 and TUS1, and inactivated by GTPase-activating proteins (GAPs) BAG7, BEM2, LRG1, and SAC7, and the Rho GDP-dissociation inhibitor RDI1. The different GAPs regulate RHO1 in a target-specific manner. Functionally, acts as a central regulator in the cell wall integrity signaling pathway, which is regulated by the cell cycle and in response to various types of cell wall stress. Integrates signals from different cell surface sensors, and activates a set of effectors, regulating processes including beta-glucan synthesis at the site of wall remodeling, gene expression related to cell wall biogenesis, organization of the actin cytoskeleton, and protein- and secretory vesicle-targeting to the growth site. Activates the protein kinase C (PKC1) MAP kinase cascade, the beta-1,3-glucan synthase (FKS1), the formin BNI1, the exocyst component SEC3 and the transcription factor SKN7. The polypeptide is GTP-binding protein RHO1 (RHO1) (Saccharomyces cerevisiae (strain ATCC 204508 / S288c) (Baker's yeast)).